Here is a 20-residue protein sequence, read N- to C-terminus: Alanine aminotransferase 1 (20 aa).

Lys-11 carries the post-translational modification N6-(pyridoxal phosphate)lysine. An N-linked (Glc) (glycation) lysine; in vitro glycan is attached at Lys-11.

The protein belongs to the class-I pyridoxal-phosphate-dependent aminotransferase family. Alanine aminotransferase subfamily. Homodimer. Pyridoxal 5'-phosphate is required as a cofactor. Glycation of Lys-11 inactivates the enzyme.

The protein resides in the cytoplasm. The enzyme catalyses L-alanine + 2-oxoglutarate = pyruvate + L-glutamate. The protein operates within amino-acid degradation; L-alanine degradation via transaminase pathway; pyruvate from L-alanine: step 1/1. Catalyzes the reversible transamination between alanine and 2-oxoglutarate to form pyruvate and glutamate. Participates in cellular nitrogen metabolism and also in liver gluconeogenesis starting with precursors transported from skeletal muscles. The protein is Alanine aminotransferase 1 (GPT) of Sus scrofa (Pig).